A 137-amino-acid chain; its full sequence is Small ribosomal subunit protein uS9 (137 aa).

The disordered stretch occupies residues 105 to 137 (LKTEGYLKRDPRAVERKKYGLRKARKAPQYSKR). The segment covering 109–122 (GYLKRDPRAVERKK) has biased composition (basic and acidic residues). Over residues 123–137 (YGLRKARKAPQYSKR) the composition is skewed to basic residues.

It belongs to the universal ribosomal protein uS9 family.

The protein is Small ribosomal subunit protein uS9 of Synechococcus sp. (strain JA-3-3Ab) (Cyanobacteria bacterium Yellowstone A-Prime).